The sequence spans 1324 residues: Coiled-coil domain-containing protein 171 (1324 aa).

5 coiled-coil regions span residues 29-296 (KNET…RAAH), 325-393 (AEAV…RLQY), 453-521 (FSVV…KCAD), 599-712 (SELC…VREN), and 981-1145 (FTQR…KECV). The span at 1301 to 1312 (PHSLSSQSSPGV) shows a compositional bias: polar residues. Residues 1301-1324 (PHSLSSQSSPGVPTNAKRPSQIGL) form a disordered region.

The polypeptide is Coiled-coil domain-containing protein 171 (Ccdc171) (Mus musculus (Mouse)).